The chain runs to 1024 residues: Beta-galactosidase (1024 aa).

The substrate site is built by Asn103 and Asp202. Residue Asp202 participates in Na(+) binding. Mg(2+) contacts are provided by Glu417, His419, and Glu462. Substrate contacts are provided by residues Glu462 and 538 to 541 (EYAH). The active-site Proton donor is the Glu462. The active-site Nucleophile is Glu538. A Mg(2+)-binding site is contributed by Asn598. 2 residues coordinate Na(+): Phe602 and Asn605. The substrate site is built by Asn605 and Trp1000.

This sequence belongs to the glycosyl hydrolase 2 family. As to quaternary structure, homotetramer. The cofactor is Mg(2+). Requires Na(+) as cofactor.

The catalysed reaction is Hydrolysis of terminal non-reducing beta-D-galactose residues in beta-D-galactosides.. The polypeptide is Beta-galactosidase (Shigella dysenteriae serotype 1 (strain Sd197)).